A 636-amino-acid chain; its full sequence is Chaperone protein HtpG (636 aa).

The segment at 1 to 349 is a; substrate-binding; sequence MAKHQFQTEV…SEDLPLNVSR (349 aa). The tract at residues 350–562 is b; the sequence is EILQENRILA…ADAQMAAMAH (213 aa). Residues 563–636 form a c region; the sequence is MFRAMGQAMP…RLSRITAKAL (74 aa).

Belongs to the heat shock protein 90 family. As to quaternary structure, homodimer.

It localises to the cytoplasm. Functionally, molecular chaperone. Has ATPase activity. This chain is Chaperone protein HtpG, found in Aliarcobacter butzleri (strain RM4018) (Arcobacter butzleri).